The following is a 349-amino-acid chain: Twinfilin-2 (349 aa).

The residue at position 2 (Ala2) is an N-acetylalanine. ADF-H domains follow at residues 4–139 and 177–313; these read QTGI…KHLS and GLAF…DEVH. Position 14 is an N6-acetyllysine (Lys14). Position 309 is a phosphotyrosine (Tyr309). The tract at residues 322–349 is disordered; the sequence is AFAKPKGPGGKRGHKRLIRGPGENGDDS. Basic residues predominate over residues 330–339; that stretch reads GGKRGHKRLI. Phosphoserine is present on Ser349.

This sequence belongs to the actin-binding proteins ADF family. Twinfilin subfamily. Interacts with G-actin; ADP-actin form and capping protein (CP). May also be able to interact with TWF1 and phosphoinositides, PI(4,5)P2. When bound to PI(4,5)P2, it is down-regulated. Interacts with MYO7A. Post-translationally, in vitro, phosphorylated by PRKCZ, CK2 and SRC. In terms of tissue distribution, ubiquitously expressed (at protein level).

The protein resides in the cytoplasm. Its subcellular location is the cytoskeleton. The protein localises to the perinuclear region. It is found in the cell projection. It localises to the stereocilium. Its function is as follows. Actin-binding protein involved in motile and morphological processes. Inhibits actin polymerization, likely by sequestering G-actin. By capping the barbed ends of filaments, it also regulates motility. Seems to play an important role in clathrin-mediated endocytosis and distribution of endocytic organelles. May play a role in regulating the mature length of the middle and short rows of stereocilia. The protein is Twinfilin-2 (TWF2) of Homo sapiens (Human).